A 417-amino-acid polypeptide reads, in one-letter code: NADP-specific glutamate dehydrogenase A1 (417 aa).

K105 is an active-site residue.

This sequence belongs to the Glu/Leu/Phe/Val dehydrogenases family. In terms of assembly, homohexamer.

It carries out the reaction L-glutamate + NADP(+) + H2O = 2-oxoglutarate + NH4(+) + NADPH + H(+). The protein is NADP-specific glutamate dehydrogenase A1 (gdhA1) of Halobacterium salinarum (Halobacterium halobium).